Reading from the N-terminus, the 400-residue chain is GTPase-binding protein rid1 (400 aa).

The span at 16–27 (LSSDGLSESVNS) shows a compositional bias: polar residues. The disordered stretch occupies residues 16–47 (LSSDGLSESVNSSDREDSLSFQTPSTPSEDEM). Positions 39 to 400 (PSTPSEDEMP…PYKLVQTGST (362 aa)) constitute a GBD/FH3 domain.

The protein resides in the cytoplasm. The polypeptide is GTPase-binding protein rid1 (rid1) (Schizosaccharomyces pombe (strain 972 / ATCC 24843) (Fission yeast)).